A 407-amino-acid polypeptide reads, in one-letter code: Phosphopentomutase (407 aa).

The Mn(2+) site is built by aspartate 10, aspartate 306, histidine 311, aspartate 347, histidine 348, and histidine 359.

This sequence belongs to the phosphopentomutase family. It depends on Mn(2+) as a cofactor.

The protein resides in the cytoplasm. The enzyme catalyses 2-deoxy-alpha-D-ribose 1-phosphate = 2-deoxy-D-ribose 5-phosphate. It carries out the reaction alpha-D-ribose 1-phosphate = D-ribose 5-phosphate. It participates in carbohydrate degradation; 2-deoxy-D-ribose 1-phosphate degradation; D-glyceraldehyde 3-phosphate and acetaldehyde from 2-deoxy-alpha-D-ribose 1-phosphate: step 1/2. In terms of biological role, isomerase that catalyzes the conversion of deoxy-ribose 1-phosphate (dRib-1-P) and ribose 1-phosphate (Rib-1-P) to deoxy-ribose 5-phosphate (dRib-5-P) and ribose 5-phosphate (Rib-5-P), respectively. The sequence is that of Phosphopentomutase from Sodalis glossinidius (strain morsitans).